A 255-amino-acid polypeptide reads, in one-letter code: 1-(5-phosphoribosyl)-5-[(5-phosphoribosylamino)methylideneamino] imidazole-4-carboxamide isomerase (255 aa).

The Proton acceptor role is filled by Asp-8. Asp-129 functions as the Proton donor in the catalytic mechanism.

The protein belongs to the HisA/HisF family.

The protein localises to the cytoplasm. The catalysed reaction is 1-(5-phospho-beta-D-ribosyl)-5-[(5-phospho-beta-D-ribosylamino)methylideneamino]imidazole-4-carboxamide = 5-[(5-phospho-1-deoxy-D-ribulos-1-ylimino)methylamino]-1-(5-phospho-beta-D-ribosyl)imidazole-4-carboxamide. It functions in the pathway amino-acid biosynthesis; L-histidine biosynthesis; L-histidine from 5-phospho-alpha-D-ribose 1-diphosphate: step 4/9. The polypeptide is 1-(5-phosphoribosyl)-5-[(5-phosphoribosylamino)methylideneamino] imidazole-4-carboxamide isomerase (Prochlorococcus marinus (strain MIT 9515)).